Consider the following 293-residue polypeptide: Sec-independent protein translocase protein TatC (293 aa).

6 helical membrane-spanning segments follow: residues Ala-35–Ile-55, Leu-87–Ala-107, Leu-123–Phe-143, Ile-173–Ile-193, Ile-204–Pro-224, and Ile-228–Ile-248.

The protein belongs to the TatC family. As to quaternary structure, the Tat system comprises two distinct complexes: a TatABC complex, containing multiple copies of TatA, TatB and TatC subunits, and a separate TatA complex, containing only TatA subunits. Substrates initially bind to the TatABC complex, which probably triggers association of the separate TatA complex to form the active translocon.

The protein resides in the cell membrane. Part of the twin-arginine translocation (Tat) system that transports large folded proteins containing a characteristic twin-arginine motif in their signal peptide across membranes. Together with TatB, TatC is part of a receptor directly interacting with Tat signal peptides. The sequence is that of Sec-independent protein translocase protein TatC from Rothia mucilaginosa (strain DY-18) (Stomatococcus mucilaginosus).